Reading from the N-terminus, the 355-residue chain is uncharacterized protein (355 aa).

The N-terminal stretch at 1–22 (MRLTHVTACICLLVAVAVLFSG) is a signal peptide.

The protein belongs to the bacterial solute-binding protein 1 family. WtpA subfamily.

This is an uncharacterized protein from Methanoculleus marisnigri (strain ATCC 35101 / DSM 1498 / JR1).